The sequence spans 765 residues: MVKAISSNLGYPRLGEKREWKRALEKFWNGAISEEELLAETKALRLHALKKQQDKGIDLIPVGDFSFYDQVLDTSVTFGIIPKRFQHDGGKVSLNTYFDIARGKSDAVASEMTKWFNTNYHYIVPELAEADPKVLDNRALYYYEEAKNELGIEGKPVLVGPVTYLKLGKGSDAESFEILLDKFIPAYIEILKELETAGATWVQIDEPYLATSFDKKEIALFEKVYKAFHDAVPNLKIELQTYFESLDYYEEVVNLPVAAVGIDFVHDHGDSIKALKAHGFPQNKYLAAGVIDGRNVWRSDLDAKLALLTDIAHYVAEDKLIVQPSNSLLHVPVTKLSEPDLDEVILGGLSFADQKLDEIAILTKALTEGAESVAAELNEAREAVKALNESSHRNNLEVQAAIANLENVRVDRELPFAERIKLQHEWLKLPLFPTTTIGSFPQSPEVRKTRADWLKGNITDAEYNAFIEKETARWIKIQEDLDIDVLVHGEFERTDMVEYFGQKLAGFQATKFGWVQSYGSRAVRPPLIYGDVAFTEEITVKESVYAQSLTKRPVKGMLTAPVTIINWSFVRDDVPESVVANQVGLALRKEVEALERNGIKVIQVDEPALREGLPLKQARWQKYLDDAVYSFKLTTASVQNDTQIHTHMCYSDFDDIIDTISALDADVISIETSRSHGEIISTFEEVTYDKEIGLGVYDIHSPRVPTVSEIQDNIRRALRAIDAKQFWINPDCGLKTRKEPETIAALQDMIKATKEVRAEYQVLEK.

5-methyltetrahydropteroyltri-L-glutamate-binding positions include 18–21 (REWK) and K114. L-homocysteine is bound by residues 437–439 (IGS) and E490. Residues 437 to 439 (IGS) and E490 contribute to the L-methionine site. W567 provides a ligand contact to 5-methyltetrahydropteroyltri-L-glutamate. D605 lines the L-homocysteine pocket. L-methionine is bound at residue D605. E611 provides a ligand contact to 5-methyltetrahydropteroyltri-L-glutamate. Positions 647, 649, and 671 each coordinate Zn(2+). H700 (proton donor) is an active-site residue. Zn(2+) is bound at residue C732.

It belongs to the vitamin-B12 independent methionine synthase family. Zn(2+) serves as cofactor.

It catalyses the reaction 5-methyltetrahydropteroyltri-L-glutamate + L-homocysteine = tetrahydropteroyltri-L-glutamate + L-methionine. Its pathway is amino-acid biosynthesis; L-methionine biosynthesis via de novo pathway; L-methionine from L-homocysteine (MetE route): step 1/1. Catalyzes the transfer of a methyl group from 5-methyltetrahydrofolate to homocysteine resulting in methionine formation. The polypeptide is 5-methyltetrahydropteroyltriglutamate--homocysteine methyltransferase (Listeria innocua serovar 6a (strain ATCC BAA-680 / CLIP 11262)).